We begin with the raw amino-acid sequence, 409 residues long: Dihydroorotase (409 aa).

2 residues coordinate Zn(2+): H57 and H59. Residues H59–R61 and N91 contribute to the substrate site. 4 residues coordinate Zn(2+): K139, H168, H208, and D276. Residue K139 is modified to N6-carboxylysine. D276 is a catalytic residue. Substrate is bound by residues H280 and A290–G291.

Belongs to the metallo-dependent hydrolases superfamily. DHOase family. Class I DHOase subfamily. Zn(2+) is required as a cofactor.

It catalyses the reaction (S)-dihydroorotate + H2O = N-carbamoyl-L-aspartate + H(+). The protein operates within pyrimidine metabolism; UMP biosynthesis via de novo pathway; (S)-dihydroorotate from bicarbonate: step 3/3. Catalyzes the reversible cyclization of carbamoyl aspartate to dihydroorotate. The chain is Dihydroorotase from Thermococcus kodakarensis (strain ATCC BAA-918 / JCM 12380 / KOD1) (Pyrococcus kodakaraensis (strain KOD1)).